A 177-amino-acid chain; its full sequence is Dual-action ribosomal maturation protein DarP (177 aa).

The tract at residues 1–26 is disordered; it reads MKIVGDSEHFKQPYDSDEEYVSKTED.

Belongs to the DarP family.

It localises to the cytoplasm. Member of a network of 50S ribosomal subunit biogenesis factors which assembles along the 30S-50S interface, preventing incorrect 23S rRNA structures from forming. Promotes peptidyl transferase center (PTC) maturation. The chain is Dual-action ribosomal maturation protein DarP from Shewanella sp. (strain MR-4).